Here is a 511-residue protein sequence, read N- to C-terminus: Bifunctional purine biosynthesis protein PurH (511 aa).

The 145-residue stretch at 1–145 (MKKRALVSVS…KNHKFVSVIV (145 aa)) folds into the MGS-like domain.

It belongs to the PurH family.

The enzyme catalyses (6R)-10-formyltetrahydrofolate + 5-amino-1-(5-phospho-beta-D-ribosyl)imidazole-4-carboxamide = 5-formamido-1-(5-phospho-D-ribosyl)imidazole-4-carboxamide + (6S)-5,6,7,8-tetrahydrofolate. It carries out the reaction IMP + H2O = 5-formamido-1-(5-phospho-D-ribosyl)imidazole-4-carboxamide. It participates in purine metabolism; IMP biosynthesis via de novo pathway; 5-formamido-1-(5-phospho-D-ribosyl)imidazole-4-carboxamide from 5-amino-1-(5-phospho-D-ribosyl)imidazole-4-carboxamide (10-formyl THF route): step 1/1. It functions in the pathway purine metabolism; IMP biosynthesis via de novo pathway; IMP from 5-formamido-1-(5-phospho-D-ribosyl)imidazole-4-carboxamide: step 1/1. This is Bifunctional purine biosynthesis protein PurH from Bacillus cereus (strain ATCC 14579 / DSM 31 / CCUG 7414 / JCM 2152 / NBRC 15305 / NCIMB 9373 / NCTC 2599 / NRRL B-3711).